Reading from the N-terminus, the 343-residue chain is ATP-dependent 6-phosphofructokinase (343 aa).

Residues glycine 10, 73 to 74 (RV), and 103 to 106 (GEGT) each bind ATP. A Mg(2+)-binding site is contributed by glutamate 104. Substrate is bound by residues 126–128 (TID), arginine 163, 170–172 (MGR), glutamate 223, arginine 267, and 273–276 (HIQR). Aspartate 128 acts as the Proton acceptor in catalysis.

The protein belongs to the phosphofructokinase type A (PFKA) family. Mixed-substrate PFK group III subfamily. In terms of assembly, homodimer or homotetramer. The cofactor is Mg(2+).

Its subcellular location is the cytoplasm. It carries out the reaction beta-D-fructose 6-phosphate + ATP = beta-D-fructose 1,6-bisphosphate + ADP + H(+). The catalysed reaction is D-tagatofuranose 6-phosphate + ATP = D-tagatofuranose 1,6-bisphosphate + ADP + H(+). The protein operates within carbohydrate degradation; glycolysis; D-glyceraldehyde 3-phosphate and glycerone phosphate from D-glucose: step 3/4. Catalyzes the phosphorylation of D-fructose 6-phosphate to fructose 1,6-bisphosphate by ATP, the first committing step of glycolysis. Can also catalyze the phosphorylation of tagatose-6-phosphate. In Mycobacterium tuberculosis (strain CDC 1551 / Oshkosh), this protein is ATP-dependent 6-phosphofructokinase.